The primary structure comprises 502 residues: Glycerol kinase (502 aa).

Residue T14 coordinates ADP. Positions 14, 15, and 16 each coordinate ATP. Residue T14 coordinates sn-glycerol 3-phosphate. R18 lines the ADP pocket. The sn-glycerol 3-phosphate site is built by R84, E85, Y136, and D246. Glycerol contacts are provided by R84, E85, Y136, D246, and Q247. T268 and G311 together coordinate ADP. ATP is bound by residues T268, G311, Q315, and G412. ADP-binding residues include G412 and N416.

This sequence belongs to the FGGY kinase family. Homotetramer and homodimer (in equilibrium). Heterodimer with EIIA-Glc. Binds 1 zinc ion per glycerol kinase EIIA-Glc dimer. The zinc ion is important for dimerization.

It carries out the reaction glycerol + ATP = sn-glycerol 3-phosphate + ADP + H(+). It participates in polyol metabolism; glycerol degradation via glycerol kinase pathway; sn-glycerol 3-phosphate from glycerol: step 1/1. Activity of this regulatory enzyme is affected by several metabolites. Allosterically and non-competitively inhibited by fructose 1,6-bisphosphate (FBP) and unphosphorylated phosphocarrier protein EIIA-Glc (III-Glc), an integral component of the bacterial phosphotransferase (PTS) system. Functionally, key enzyme in the regulation of glycerol uptake and metabolism. Catalyzes the phosphorylation of glycerol to yield sn-glycerol 3-phosphate. This chain is Glycerol kinase, found in Escherichia coli (strain ATCC 8739 / DSM 1576 / NBRC 3972 / NCIMB 8545 / WDCM 00012 / Crooks).